We begin with the raw amino-acid sequence, 271 residues long: Ribosomal RNA small subunit methyltransferase A (271 aa).

Positions 11, 13, 38, 58, 86, and 101 each coordinate S-adenosyl-L-methionine.

The protein belongs to the class I-like SAM-binding methyltransferase superfamily. rRNA adenine N(6)-methyltransferase family. RsmA subfamily.

It localises to the cytoplasm. It catalyses the reaction adenosine(1518)/adenosine(1519) in 16S rRNA + 4 S-adenosyl-L-methionine = N(6)-dimethyladenosine(1518)/N(6)-dimethyladenosine(1519) in 16S rRNA + 4 S-adenosyl-L-homocysteine + 4 H(+). Its function is as follows. Specifically dimethylates two adjacent adenosines (A1518 and A1519) in the loop of a conserved hairpin near the 3'-end of 16S rRNA in the 30S particle. May play a critical role in biogenesis of 30S subunits. This is Ribosomal RNA small subunit methyltransferase A from Helicobacter acinonychis (strain Sheeba).